The sequence spans 39 residues: Photosystem II reaction center protein L (39 aa).

A helical transmembrane segment spans residues 18–38; that stretch reads SLYLGLLLVFVTGVLFSSYFF.

It belongs to the PsbL family. PSII is composed of 1 copy each of membrane proteins PsbA, PsbB, PsbC, PsbD, PsbE, PsbF, PsbH, PsbI, PsbJ, PsbK, PsbL, PsbM, PsbT, PsbX, PsbY, PsbZ, Psb30/Ycf12, at least 3 peripheral proteins of the oxygen-evolving complex and a large number of cofactors. It forms dimeric complexes.

It localises to the plastid. Its subcellular location is the organellar chromatophore thylakoid membrane. In terms of biological role, one of the components of the core complex of photosystem II (PSII). PSII is a light-driven water:plastoquinone oxidoreductase that uses light energy to abstract electrons from H(2)O, generating O(2) and a proton gradient subsequently used for ATP formation. It consists of a core antenna complex that captures photons, and an electron transfer chain that converts photonic excitation into a charge separation. This subunit is found at the monomer-monomer interface and is required for correct PSII assembly and/or dimerization. The polypeptide is Photosystem II reaction center protein L (Paulinella chromatophora).